The chain runs to 2602 residues: Filamin-B (2602 aa).

Residues 1-239 (MPVTEKDLAE…VMTYLSQFPK (239 aa)) form an actin-binding region. 2 consecutive Calponin-homology (CH) domains span residues 16 to 122 (KIQQ…LHYS) and 139 to 242 (QTPK…KAKL). Position 216 is a phosphothreonine (T216). The interval 244–267 (PGAPLKPKLNPKKARAYGRGIEPT) is disordered. Filamin repeat units follow at residues 249–347 (KPKL…EVSV), 349–446 (KAQG…VVQV), 447–543 (GEAC…EVQV), 544–636 (GPEA…MAFI), 640–736 (TGGY…RVNI), 737–839 (GQGS…RVKV), 840–938 (DPSH…TVGV), 939–1034 (AAPL…TVEA), 1035–1127 (SLPP…KADI), 1128–1222 (EMPF…RVKV), 1223–1322 (EPAV…KVAV), 1323–1415 (TEGC…RVPV), 1416–1511 (KDVV…KVKV), 1512–1608 (LPTY…RIRA), and 1609–1704 (TQTG…TVMA). T519 is modified (phosphothreonine). Residue K681 is modified to N6-acetyllysine. S730 bears the Phosphoserine mark. S886, S932, S983, and S1028 each carry phosphoserine. Residues 1128 to 1511 (EMPFDPSKVV…IPRSPFKVKV (384 aa)) form an interaction with FBLP1 region. T1307 is subject to Phosphothreonine. S1316 is subject to Phosphoserine. Residues S1433, N1474, S1505, and S1602 each carry the phosphoserine modification. The interval 1705-1728 (TDGEVTAVEEAPVNACPPGFRPWV) is hinge 1. Filamin repeat units lie at residues 1729–1813 (TEEA…SPLQ), 1816–1908 (VNYP…TAKI), 1919–1994 (KLGS…SIMV), 1997–2089 (SEIG…TVKI), 2091–2185 (GEGR…QFTV), 2188–2280 (LGEG…LVPV), 2282–2375 (APSD…KVRV), and 2379–2471 (GQAG…KAKV). K1780 is subject to N6-acetyllysine. An interaction with the cytoplasmic tail of GP1BA region spans residues 1862 to 2148 (SKAEISCIDN…RVTEAEIVPM (287 aa)). The interaction with FLNA 1 stretch occupies residues 2060-2225 (SYFPTVPGVY…IWTREAGAGG (166 aa)). S2083, S2107, and S2113 each carry phosphoserine. Residues 2130–2602 (SAHVTSPSGR…PGSPFHVTVP (473 aa)) are interaction with INPPL1. A phosphoserine mark is found at S2369 and S2465. K2468 is covalently cross-linked (Glycyl lysine isopeptide (Lys-Gly) (interchain with G-Cter in ISG15)). The hinge 2 stretch occupies residues 2472 to 2506 (TGQRLVSPGSANETSSILVESVTRSSTETCYSAIP). A self-association site, tail region spans residues 2472–2602 (TGQRLVSPGS…PGSPFHVTVP (131 aa)). Phosphoserine is present on residues S2478, S2481, and S2492. The stretch at 2507–2601 (KASSDASKVT…IPGSPFHVTV (95 aa)) is one Filamin 24 repeat. The interval 2507 to 2602 (KASSDASKVT…PGSPFHVTVP (96 aa)) is interaction with FLNA 2. K2518 and K2524 each carry N6-succinyllysine. K2576 bears the N6-acetyllysine mark.

This sequence belongs to the filamin family. As to quaternary structure, homodimer. Interacts with MICALL2. Interacts with RFLNA and RFLNB. Isoform 1 interacts with FBLP1, FLNA, FLNC, GP1BA, INPPL1, ITGB1A, PSEN1 and PSEN2. Isoform 3 interacts with ITGB1A, ITGB1D, ITGB3 and ITGB6. Interacts with MYOT and MYOZ1. Interacts with HBV capsid protein. Interacts with ASB2 isoform 1; the interaction targets FLNB for proteasomal degradation. Post-translationally, ISGylation prevents ability to interact with the upstream activators of the JNK cascade and inhibits IFNA-induced JNK signaling. In terms of processing, ubiquitination by a SCF-like complex containing ASB2 isoform 1 leads to proteasomal degradation which promotes muscle differentiation. As to expression, ubiquitous. Isoform 1 and isoform 2 are expressed in placenta, bone marrow, brain, umbilical vein endothelial cells (HUVEC), retina and skeletal muscle. Isoform 1 is predominantly expressed in prostate, uterus, liver, thyroid, stomach, lymph node, small intestine, spleen, skeletal muscle, kidney, placenta, pancreas, heart, lung, platelets, endothelial cells, megakaryocytic and erythroleukemic cell lines. Isoform 2 is predominantly expressed in spinal cord, platelet and Daudi cells. Also expressed in thyroid adenoma, neurofibrillary tangles (NFT), senile plaques in the hippocampus and cerebral cortex in Alzheimer disease (AD). Isoform 3 and isoform 6 are expressed predominantly in lung, heart, skeletal muscle, testis, spleen, thymus and leukocytes. Isoform 4 and isoform 5 are expressed in heart.

It is found in the cytoplasm. It localises to the cell cortex. The protein resides in the cytoskeleton. Its subcellular location is the stress fiber. The protein localises to the myofibril. It is found in the sarcomere. It localises to the z line. In terms of biological role, connects cell membrane constituents to the actin cytoskeleton. May promote orthogonal branching of actin filaments and links actin filaments to membrane glycoproteins. Anchors various transmembrane proteins to the actin cytoskeleton. Interaction with FLNA may allow neuroblast migration from the ventricular zone into the cortical plate. Various interactions and localizations of isoforms affect myotube morphology and myogenesis. Isoform 6 accelerates muscle differentiation in vitro. The protein is Filamin-B (FLNB) of Homo sapiens (Human).